Reading from the N-terminus, the 1074-residue chain is Topoisomerase 1-associated factor 1 (1074 aa).

Disordered regions lie at residues 572–595 (NTHK…QRKI) and 936–1074 (EEPP…DRET). Basic residues-rich tracts occupy residues 948–962 (LLRR…RRRS) and 978–991 (GHQH…KRAK). A compositionally biased stretch (basic and acidic residues) spans 1014 to 1031 (EATRRFFENEERLRREMD). Basic residues predominate over residues 1046–1055 (VKRKRGKKNG).

Belongs to the timeless family.

Its subcellular location is the nucleus. Functionally, involved in chromosome segregation during meiosis and DNA damage repair. In Cryptococcus neoformans var. neoformans serotype D (strain JEC21 / ATCC MYA-565) (Filobasidiella neoformans), this protein is Topoisomerase 1-associated factor 1 (TOF1).